Consider the following 317-residue polypeptide: MGDRIKILTGNAHRELASEISDDLNLALGKAHVGKFSNGETSVMISESIRDMDVYIIQPTCNPNVNDNLMELLIMADAIRRASAHRITAVIPCFGYARQDKKDKSRAPITGKLVANLIETAGIDRVITMDLHASQIQGFFNIPVDNLYAEPQIIKYIRKYIPGEKVIVSPDAGGVKRAKSISDKLDADLAIIHKERKKANEVSGMILVGDVKDKVALIVDDMADTCGTLVSACEMLISKGATKVYALVTHGVLSGDAIQKLNESSLTELVITNTIPHAEKAAKCPKIKTINIAHTLSEAIRRTHHGESISSLFSDTK.

Positions 130, 132, and 145 each coordinate Mg(2+). The tract at residues 212 to 227 (KDKVALIVDDMADTCG) is binding of phosphoribosylpyrophosphate.

The protein belongs to the ribose-phosphate pyrophosphokinase family. Mg(2+) serves as cofactor.

The catalysed reaction is D-ribose 5-phosphate + ATP = 5-phospho-alpha-D-ribose 1-diphosphate + AMP + H(+). It participates in metabolic intermediate biosynthesis; 5-phospho-alpha-D-ribose 1-diphosphate biosynthesis; 5-phospho-alpha-D-ribose 1-diphosphate from D-ribose 5-phosphate (route I): step 1/1. The polypeptide is Ribose-phosphate pyrophosphokinase A (prsA) (Dictyostelium discoideum (Social amoeba)).